A 181-amino-acid polypeptide reads, in one-letter code: CAPA peptides (181 aa).

The N-terminal stretch at 1-22 (MQDNRFFILMILLVFSTSLNQG) is a signal peptide. Positions 23-29 (QKLKAND) are excised as a propeptide. Isoleucine amide is present on I41. Positions 44–54 (NSEISSFSRSE) are excised as a propeptide. Position 65 is an isoleucine amide (I65). A propeptide spanning residues 68–181 (SDVSSFDNLN…ENERDTANFL (114 aa)) is cleaved from the precursor. Positions 159–181 (TQGQGGYTPRLGRENERDTANFL) are disordered. A compositionally biased stretch (basic and acidic residues) spans 169–181 (LGRENERDTANFL).

A pyrokinin potentially constituted by residues Asn-158 to Gly-170 has so far not been detected and might be completely absent in ants. As to expression, periviscerokinin 1 and 2 are expressed in central brain, antennal lobes and gnathal, thoracic and abominal ganglia. Periviscerokinin 2 is also expressed in the retrocerebral complex (at protein level).

It is found in the secreted. Periviscerokinins mediate visceral muscle contractile activity (myotropic activity). The chain is CAPA peptides from Camponotus floridanus (Florida carpenter ant).